Reading from the N-terminus, the 470-residue chain is Putative F-box/LRR-repeat protein At3g58920 (470 aa).

The F-box domain occupies 1 to 53 (MDRISNLPNEIICHIVSFLSAKEAAFASVLSKRWQNLFTIVQKLEFDDSVKNQ). 6 LRR repeats span residues 114-142 (KLEI…KLTS), 143-170 (CIFA…FLKS), 173-198 (FSDL…TIYD), 225-250 (FTYF…KYID), 287-312 (EDDP…HLST), and 342-367 (YECF…MIKG).

The chain is Putative F-box/LRR-repeat protein At3g58920 from Arabidopsis thaliana (Mouse-ear cress).